The sequence spans 154 residues: Large-conductance mechanosensitive channel (154 aa).

2 helical membrane-spanning segments follow: residues G12–T32 and I71–V91. Positions N129–T154 are disordered.

Belongs to the MscL family. In terms of assembly, homopentamer.

Its subcellular location is the cell membrane. Channel that opens in response to stretch forces in the membrane lipid bilayer. May participate in the regulation of osmotic pressure changes within the cell. The protein is Large-conductance mechanosensitive channel of Mycobacterium leprae (strain Br4923).